Consider the following 150-residue polypeptide: Mediator of RNA polymerase II transcription subunit 22a (150 aa).

A coiled-coil region spans residues 99-127; it reads SLNDHVEQRIAEFDQEAEKTNRLLARIAD.

It belongs to the Mediator complex subunit 22 family. In terms of assembly, component of the Mediator complex.

It localises to the nucleus. In terms of biological role, component of the Mediator complex, a coactivator involved in the regulated transcription of nearly all RNA polymerase II-dependent genes. Mediator functions as a bridge to convey information from gene-specific regulatory proteins to the basal RNA polymerase II transcription machinery. The Mediator complex, having a compact conformation in its free form, is recruited to promoters by direct interactions with regulatory proteins and serves for the assembly of a functional preinitiation complex with RNA polymerase II and the general transcription factors. The sequence is that of Mediator of RNA polymerase II transcription subunit 22a (MED22A) from Arabidopsis thaliana (Mouse-ear cress).